A 391-amino-acid chain; its full sequence is 1-deoxy-D-xylulose 5-phosphate reductoisomerase (391 aa).

NADPH contacts are provided by T11, G12, S13, I14, G37, N39, and N125. K126 serves as a coordination point for 1-deoxy-D-xylulose 5-phosphate. E127 lines the NADPH pocket. D151 is a Mn(2+) binding site. Positions 152, 153, 176, and 199 each coordinate 1-deoxy-D-xylulose 5-phosphate. E153 is a Mn(2+) binding site. An NADPH-binding site is contributed by G205. The 1-deoxy-D-xylulose 5-phosphate site is built by S212, N217, K218, and E221. E221 lines the Mn(2+) pocket.

It belongs to the DXR family. Requires Mg(2+) as cofactor. Mn(2+) serves as cofactor.

It carries out the reaction 2-C-methyl-D-erythritol 4-phosphate + NADP(+) = 1-deoxy-D-xylulose 5-phosphate + NADPH + H(+). It participates in isoprenoid biosynthesis; isopentenyl diphosphate biosynthesis via DXP pathway; isopentenyl diphosphate from 1-deoxy-D-xylulose 5-phosphate: step 1/6. In terms of biological role, catalyzes the NADPH-dependent rearrangement and reduction of 1-deoxy-D-xylulose-5-phosphate (DXP) to 2-C-methyl-D-erythritol 4-phosphate (MEP). The sequence is that of 1-deoxy-D-xylulose 5-phosphate reductoisomerase from Heliobacterium modesticaldum (strain ATCC 51547 / Ice1).